Here is a 628-residue protein sequence, read N- to C-terminus: Phosphomethylpyrimidine synthase (628 aa).

The segment at 1–22 (MSKQEKTINLSESAQVDQQSVQ) is disordered. The segment covering 7 to 22 (TINLSESAQVDQQSVQ) has biased composition (polar residues). Residues N232, M261, Y290, H326, 346-348 (SRG), 387-390 (DGLR), and E426 contribute to the substrate site. Position 430 (H430) interacts with Zn(2+). Y453 serves as a coordination point for substrate. H494 provides a ligand contact to Zn(2+). [4Fe-4S] cluster is bound by residues C574, C577, and C582.

It belongs to the ThiC family. In terms of assembly, homodimer. Requires [4Fe-4S] cluster as cofactor.

The enzyme catalyses 5-amino-1-(5-phospho-beta-D-ribosyl)imidazole + S-adenosyl-L-methionine = 4-amino-2-methyl-5-(phosphooxymethyl)pyrimidine + CO + 5'-deoxyadenosine + formate + L-methionine + 3 H(+). It functions in the pathway cofactor biosynthesis; thiamine diphosphate biosynthesis. Its function is as follows. Catalyzes the synthesis of the hydroxymethylpyrimidine phosphate (HMP-P) moiety of thiamine from aminoimidazole ribotide (AIR) in a radical S-adenosyl-L-methionine (SAM)-dependent reaction. The sequence is that of Phosphomethylpyrimidine synthase from Pseudomonas putida (strain W619).